Reading from the N-terminus, the 211-residue chain is Dephospho-CoA kinase (211 aa).

The region spanning 3 to 206 is the DPCK domain; the sequence is VLGLTGGIGS…PGMKGPDPHA (204 aa). 11–16 is a binding site for ATP; that stretch reads GSGKSI.

This sequence belongs to the CoaE family.

It is found in the cytoplasm. It carries out the reaction 3'-dephospho-CoA + ATP = ADP + CoA + H(+). The protein operates within cofactor biosynthesis; coenzyme A biosynthesis; CoA from (R)-pantothenate: step 5/5. Its function is as follows. Catalyzes the phosphorylation of the 3'-hydroxyl group of dephosphocoenzyme A to form coenzyme A. The polypeptide is Dephospho-CoA kinase (Syntrophotalea carbinolica (strain DSM 2380 / NBRC 103641 / GraBd1) (Pelobacter carbinolicus)).